Consider the following 160-residue polypeptide: Ureidoglycolate lyase (160 aa).

Belongs to the ureidoglycolate lyase family. As to quaternary structure, homodimer. It depends on Ni(2+) as a cofactor.

The catalysed reaction is (S)-ureidoglycolate = urea + glyoxylate. It functions in the pathway nitrogen metabolism; (S)-allantoin degradation. Functionally, catalyzes the catabolism of the allantoin degradation intermediate (S)-ureidoglycolate, generating urea and glyoxylate. Involved in the utilization of allantoin as nitrogen source. The polypeptide is Ureidoglycolate lyase (Salmonella typhimurium (strain LT2 / SGSC1412 / ATCC 700720)).